We begin with the raw amino-acid sequence, 256 residues long: NAD-dependent protein deacetylase (256 aa).

Residues 1–254 (MDISYHEKIS…KDILDVIKSE (254 aa)) enclose the Deacetylase sirtuin-type domain. NAD(+)-binding residues include Ala28, Thr32, Phe39, Arg40, Gln105, Ile107, Asp108, and His123. Nicotinamide is bound at residue Phe39. Residues Ile107 and Asp108 each coordinate nicotinamide. The active-site Proton acceptor is His123. Residues Cys131, Cys134, Cys156, and Cys159 each contribute to the Zn(2+) site. Residues Thr197, Ser198, and Asn222 each coordinate NAD(+).

Belongs to the sirtuin family. Class U subfamily. Zn(2+) is required as a cofactor.

The protein localises to the cytoplasm. It catalyses the reaction N(6)-acetyl-L-lysyl-[protein] + NAD(+) + H2O = 2''-O-acetyl-ADP-D-ribose + nicotinamide + L-lysyl-[protein]. In terms of biological role, NAD-dependent protein deacetylase which modulates the activities of several enzymes which are inactive in their acetylated form. This is NAD-dependent protein deacetylase from Thermodesulfovibrio yellowstonii (strain ATCC 51303 / DSM 11347 / YP87).